The following is a 430-amino-acid chain: uncharacterized protein (430 aa).

The next 2 helical transmembrane spans lie at tyrosine 20–proline 40 and tyrosine 405–isoleucine 425.

It localises to the membrane. This is an uncharacterized protein from Schizosaccharomyces pombe (strain 972 / ATCC 24843) (Fission yeast).